A 65-amino-acid polypeptide reads, in one-letter code: Large ribosomal subunit protein bL35 (65 aa).

Residues 1 to 30 are disordered; sequence MPKMKTVSGAAKRFKKTGSGRFKSKQSHLR. Over residues 12 to 30 the composition is skewed to basic residues; the sequence is KRFKKTGSGRFKSKQSHLR.

This sequence belongs to the bacterial ribosomal protein bL35 family.

The protein is Large ribosomal subunit protein bL35 of Alteromonas mediterranea (strain DSM 17117 / CIP 110805 / LMG 28347 / Deep ecotype).